Consider the following 380-residue polypeptide: Chaperone protein DnaJ (380 aa).

One can recognise a J domain in the interval 5 to 70 (DYYEVLGVSK…QKRQTYDQYG (66 aa)). A CR-type zinc finger spans residues 136-214 (GKEVEIKIPT…CHGQGRVEKT (79 aa)). Zn(2+)-binding residues include C149, C152, C166, C169, C188, C191, C202, and C205. 4 CXXCXGXG motif repeats span residues 149 to 156 (CDPCDGSG), 166 to 173 (CTTCHGAG), 188 to 195 (CPTCQGQG), and 202 to 209 (CDSCHGQG).

This sequence belongs to the DnaJ family. As to quaternary structure, homodimer. Requires Zn(2+) as cofactor.

The protein localises to the cytoplasm. Its function is as follows. Participates actively in the response to hyperosmotic and heat shock by preventing the aggregation of stress-denatured proteins and by disaggregating proteins, also in an autonomous, DnaK-independent fashion. Unfolded proteins bind initially to DnaJ; upon interaction with the DnaJ-bound protein, DnaK hydrolyzes its bound ATP, resulting in the formation of a stable complex. GrpE releases ADP from DnaK; ATP binding to DnaK triggers the release of the substrate protein, thus completing the reaction cycle. Several rounds of ATP-dependent interactions between DnaJ, DnaK and GrpE are required for fully efficient folding. Also involved, together with DnaK and GrpE, in the DNA replication of plasmids through activation of initiation proteins. This chain is Chaperone protein DnaJ, found in Pseudoalteromonas translucida (strain TAC 125).